A 203-amino-acid chain; its full sequence is MFSVGLTGGIGSGKTTVSNLFGALGATIVDTDLIAHRITAPHGLAMPFIEREFGAQFVAADGSLDRAKMRALIFSDESARKRLEAITHPLIREETEREAGAAHGAYVVFVVPLLVESGTWEARVDRVLVVDCDVETQIARVMSRNGFAREQVEAIVARQASRDARLAAADDVIVNDNASLDELAAEVAALHQRYLGYAAAAPN.

The region spanning 3-201 (SVGLTGGIGS…QRYLGYAAAA (199 aa)) is the DPCK domain. ATP is bound at residue 11–16 (GSGKTT).

The protein belongs to the CoaE family.

Its subcellular location is the cytoplasm. The enzyme catalyses 3'-dephospho-CoA + ATP = ADP + CoA + H(+). The protein operates within cofactor biosynthesis; coenzyme A biosynthesis; CoA from (R)-pantothenate: step 5/5. Catalyzes the phosphorylation of the 3'-hydroxyl group of dephosphocoenzyme A to form coenzyme A. In Burkholderia thailandensis (strain ATCC 700388 / DSM 13276 / CCUG 48851 / CIP 106301 / E264), this protein is Dephospho-CoA kinase.